We begin with the raw amino-acid sequence, 396 residues long: Tyrosine--tRNA ligase (396 aa).

A 'HIGH' region motif is present at residues 43-52 (PTAPDIHLGH). Residues 227–231 (KMSKS) carry the 'KMSKS' region motif. ATP is bound at residue Lys230. The 61-residue stretch at 335-395 (IGLATLLKEA…GKRKFARVTV (61 aa)) folds into the S4 RNA-binding domain.

Belongs to the class-I aminoacyl-tRNA synthetase family. TyrS type 2 subfamily. In terms of assembly, homodimer.

The protein resides in the cytoplasm. It carries out the reaction tRNA(Tyr) + L-tyrosine + ATP = L-tyrosyl-tRNA(Tyr) + AMP + diphosphate + H(+). Functionally, catalyzes the attachment of tyrosine to tRNA(Tyr) in a two-step reaction: tyrosine is first activated by ATP to form Tyr-AMP and then transferred to the acceptor end of tRNA(Tyr). This chain is Tyrosine--tRNA ligase, found in Haemophilus ducreyi (strain 35000HP / ATCC 700724).